The sequence spans 221 residues: Germin-like protein subfamily 1 member 15 (221 aa).

The first 21 residues, 1 to 21 (MKVSMSLILITFWALVTIAKA), serve as a signal peptide directing secretion. A disulfide bridge links Cys31 with Cys48. Residues 62–213 (SGLNQAGITN…AFQLDVNVVK (152 aa)) enclose the Cupin type-1 domain. Residue Asn77 is glycosylated (N-linked (GlcNAc...) asparagine). The Mn(2+) site is built by His110, His112, Glu117, and His159.

This sequence belongs to the germin family. As to quaternary structure, oligomer (believed to be a pentamer but probably hexamer).

The protein localises to the secreted. Its subcellular location is the extracellular space. It is found in the apoplast. In terms of biological role, may play a role in plant defense. Probably has no oxalate oxidase activity even if the active site is conserved. The sequence is that of Germin-like protein subfamily 1 member 15 from Arabidopsis thaliana (Mouse-ear cress).